We begin with the raw amino-acid sequence, 392 residues long: Phosphoglycerate kinase (392 aa).

Substrate-binding positions include 26–28, Arg-41, 64–67, Arg-118, and Arg-151; these read DLN and HLGR. ATP-binding positions include Lys-202, Glu-319, and 345 to 348; that span reads GGDT.

This sequence belongs to the phosphoglycerate kinase family. As to quaternary structure, monomer.

It is found in the cytoplasm. It catalyses the reaction (2R)-3-phosphoglycerate + ATP = (2R)-3-phospho-glyceroyl phosphate + ADP. It functions in the pathway carbohydrate degradation; glycolysis; pyruvate from D-glyceraldehyde 3-phosphate: step 2/5. In Photobacterium profundum (strain SS9), this protein is Phosphoglycerate kinase.